The primary structure comprises 280 residues: Phosphatidylglycerol--prolipoprotein diacylglyceryl transferase (280 aa).

3 helical membrane-spanning segments follow: residues 15–35 (IFSI…IFAL), 60–80 (FIGL…PVFF), and 90–110 (IWEG…VLLF). R138 contacts a 1,2-diacyl-sn-glycero-3-phospho-(1'-sn-glycerol). The next 2 membrane-spanning stretches (helical) occupy residues 217-237 (MPFG…RIFL) and 257-277 (GQLL…NIYV).

This sequence belongs to the Lgt family.

The protein localises to the cell membrane. It carries out the reaction L-cysteinyl-[prolipoprotein] + a 1,2-diacyl-sn-glycero-3-phospho-(1'-sn-glycerol) = an S-1,2-diacyl-sn-glyceryl-L-cysteinyl-[prolipoprotein] + sn-glycerol 1-phosphate + H(+). It participates in protein modification; lipoprotein biosynthesis (diacylglyceryl transfer). Functionally, catalyzes the transfer of the diacylglyceryl group from phosphatidylglycerol to the sulfhydryl group of the N-terminal cysteine of a prolipoprotein, the first step in the formation of mature lipoproteins. This Buchnera aphidicola subsp. Baizongia pistaciae (strain Bp) protein is Phosphatidylglycerol--prolipoprotein diacylglyceryl transferase.